The primary structure comprises 197 residues: Protein GrpE (197 aa).

The span at 1-12 (MTDSDGKTDKSG) shows a compositional bias: basic and acidic residues. The interval 1 to 35 (MTDSDGKTDKSGEPAAEVEPVVSKPYVMPDDPEDD) is disordered.

It belongs to the GrpE family. In terms of assembly, homodimer.

Its subcellular location is the cytoplasm. Functionally, participates actively in the response to hyperosmotic and heat shock by preventing the aggregation of stress-denatured proteins, in association with DnaK and GrpE. It is the nucleotide exchange factor for DnaK and may function as a thermosensor. Unfolded proteins bind initially to DnaJ; upon interaction with the DnaJ-bound protein, DnaK hydrolyzes its bound ATP, resulting in the formation of a stable complex. GrpE releases ADP from DnaK; ATP binding to DnaK triggers the release of the substrate protein, thus completing the reaction cycle. Several rounds of ATP-dependent interactions between DnaJ, DnaK and GrpE are required for fully efficient folding. This is Protein GrpE from Nitrobacter winogradskyi (strain ATCC 25391 / DSM 10237 / CIP 104748 / NCIMB 11846 / Nb-255).